Reading from the N-terminus, the 199-residue chain is Pyridoxine/pyridoxamine 5'-phosphate oxidase (199 aa).

FMN is bound by residues 44-49, 59-60, Lys-66, and Gln-91; these read RTVLLK and YS. Lys-49 is a substrate binding site. Tyr-109, Arg-113, and Ser-117 together coordinate substrate. Residues 126–127 and Trp-171 each bind FMN; that span reads QS. 177 to 179 is a binding site for substrate; that stretch reads RLH. Arg-181 serves as a coordination point for FMN.

Belongs to the pyridoxamine 5'-phosphate oxidase family. As to quaternary structure, homodimer. FMN is required as a cofactor.

The enzyme catalyses pyridoxamine 5'-phosphate + O2 + H2O = pyridoxal 5'-phosphate + H2O2 + NH4(+). The catalysed reaction is pyridoxine 5'-phosphate + O2 = pyridoxal 5'-phosphate + H2O2. The protein operates within cofactor metabolism; pyridoxal 5'-phosphate salvage; pyridoxal 5'-phosphate from pyridoxamine 5'-phosphate: step 1/1. It participates in cofactor metabolism; pyridoxal 5'-phosphate salvage; pyridoxal 5'-phosphate from pyridoxine 5'-phosphate: step 1/1. Functionally, catalyzes the oxidation of either pyridoxine 5'-phosphate (PNP) or pyridoxamine 5'-phosphate (PMP) into pyridoxal 5'-phosphate (PLP). The polypeptide is Pyridoxine/pyridoxamine 5'-phosphate oxidase (Xanthomonas oryzae pv. oryzae (strain KACC10331 / KXO85)).